Reading from the N-terminus, the 208-residue chain is Ribosomal RNA large subunit methyltransferase E (208 aa).

Positions 61, 63, 81, 97, and 122 each coordinate S-adenosyl-L-methionine. Lys162 serves as the catalytic Proton acceptor.

Belongs to the class I-like SAM-binding methyltransferase superfamily. RNA methyltransferase RlmE family.

It is found in the cytoplasm. The catalysed reaction is uridine(2552) in 23S rRNA + S-adenosyl-L-methionine = 2'-O-methyluridine(2552) in 23S rRNA + S-adenosyl-L-homocysteine + H(+). Functionally, specifically methylates the uridine in position 2552 of 23S rRNA at the 2'-O position of the ribose in the fully assembled 50S ribosomal subunit. This Pseudomonas entomophila (strain L48) protein is Ribosomal RNA large subunit methyltransferase E.